The following is a 299-amino-acid chain: Syntenin-1 (299 aa).

An N-acetylserine modification is found at S2. The segment at 2–103 (SLYPSLEDLK…VAPVTGNDAG (102 aa)) is interaction with PDCD6IP. 3 short sequence motifs (LYPX(n)L motif) span residues 3 to 7 (LYPSL), 46 to 50 (LYPKL), and 50 to 54 (LYPEL). At S6 the chain carries Phosphoserine. Position 47 is a phosphotyrosine (Y47). 2 PDZ domains span residues 115 to 194 (EVIL…IRDR) and 199 to 273 (TVTM…IMPT). An a 1,2-diacyl-sn-glycero-3-phospho-(1D-myo-inositol-4,5-bisphosphate)-binding site is contributed by 251–252 (KD).

As to quaternary structure, monomer and homodimer. Interacts with SDC1, SDC2, SDC3, SDC4, NRXN2, EPHA7, EPHB1, NF2 isoform 1, TGFA, IL5RA, NFASC, SDCBP2 and PTPRJ. Interacts with PDCD6IP. Forms a complex with PDCD6IP and SDC2. Interacts (via C-terminus) with TGFBR1. Binds to FZD7; this interaction is increased by inositol trisphosphate (IP3). Interacts with SMO. Post-translationally, phosphorylated on tyrosine residues.

The protein resides in the cell junction. It localises to the focal adhesion. The protein localises to the adherens junction. Its subcellular location is the cell membrane. It is found in the endoplasmic reticulum membrane. The protein resides in the nucleus. It localises to the melanosome. The protein localises to the cytoplasm. Its subcellular location is the cytosol. It is found in the cytoskeleton. The protein resides in the secreted. It localises to the extracellular exosome. The protein localises to the membrane raft. Multifunctional adapter protein involved in diverse array of functions including trafficking of transmembrane proteins, neuro and immunomodulation, exosome biogenesis, and tumorigenesis. Positively regulates TGFB1-mediated SMAD2/3 activation and TGFB1-induced epithelial-to-mesenchymal transition (EMT) and cell migration in various cell types. May increase TGFB1 signaling by enhancing cell-surface expression of TGFR1 by preventing the interaction between TGFR1 and CAV1 and subsequent CAV1-dependent internalization and degradation of TGFR1. In concert with SDC1/4 and PDCD6IP, regulates exosome biogenesis. Regulates migration, growth, proliferation, and cell cycle progression in a variety of cancer types. In adherens junctions may function to couple syndecans to cytoskeletal proteins or signaling components. Seems to couple transcription factor SOX4 to the IL-5 receptor (IL5RA). May also play a role in vesicular trafficking. Seems to be required for the targeting of TGFA to the cell surface in the early secretory pathway. The polypeptide is Syntenin-1 (Sdcbp) (Mus musculus (Mouse)).